The primary structure comprises 175 residues: Large ribosomal subunit protein uL6 (175 aa).

Belongs to the universal ribosomal protein uL6 family. In terms of assembly, part of the 50S ribosomal subunit.

Functionally, this protein binds to the 23S rRNA, and is important in its secondary structure. It is located near the subunit interface in the base of the L7/L12 stalk, and near the tRNA binding site of the peptidyltransferase center. This Xylella fastidiosa (strain M12) protein is Large ribosomal subunit protein uL6.